The sequence spans 447 residues: NADH peroxidase (447 aa).

Residues 7 to 11 (GSSHG), Glu-32, Cys-42, 110 to 113 (SPGA), and Arg-132 contribute to the FAD site. The Proton acceptor role is filled by His-10. Cys-42 acts as the Redox-active in catalysis. Cys-42 carries the cysteine sulfenic acid (-SOH) modification. Residues Ile-160, Asp-179, Tyr-188, and Gly-243 each contribute to the NAD(+) site. An FAD-binding site is contributed by Asp-281. Ala-297 provides a ligand contact to NAD(+). Ala-299 provides a ligand contact to FAD. Position 328 (Gly-328) interacts with NAD(+).

It belongs to the class-III pyridine nucleotide-disulfide oxidoreductase family. As to quaternary structure, homotetramer. FAD serves as cofactor.

It carries out the reaction H2O2 + NADH + H(+) = NAD(+) + 2 H2O. Its function is as follows. Peroxidase whose active site is a redox-active cysteine-sulfenic acid. The polypeptide is NADH peroxidase (npr) (Enterococcus faecalis (strain ATCC 700802 / V583)).